We begin with the raw amino-acid sequence, 254 residues long: 21S rRNA pseudouridine(2819) synthase (254 aa).

Aspartate 71 is an active-site residue.

This sequence belongs to the pseudouridine synthase RluA family.

It localises to the mitochondrion. It carries out the reaction uridine(2819) in 21S rRNA = pseudouridine(2819) in 21S rRNA. Its function is as follows. Pseudouridylate synthase responsible for the pseudouridine-2819 formation in mitochondrial 21S rRNA. May modulate the efficiency or the fidelity of the mitochondrial translation machinery. This chain is 21S rRNA pseudouridine(2819) synthase (PUS5), found in Saccharomyces cerevisiae (strain ATCC 204508 / S288c) (Baker's yeast).